The sequence spans 433 residues: GTPase Der (433 aa).

EngA-type G domains follow at residues 5–167 and 174–349; these read KKVL…GEVG and IKVG…DQLE. GTP-binding positions include 11-18, 58-62, 119-122, 180-187, 227-231, and 292-295; these read GRPNVGKS, DTGGF, NKVD, GKPNSGKS, DTAGI, and SKWD. In terms of domain architecture, KH-like spans 349 to 429; sequence ELKTSTPDLN…PILVELKEKI (81 aa).

Belongs to the TRAFAC class TrmE-Era-EngA-EngB-Septin-like GTPase superfamily. EngA (Der) GTPase family. Associates with the 50S ribosomal subunit.

GTPase that plays an essential role in the late steps of ribosome biogenesis. The sequence is that of GTPase Der from Borreliella burgdorferi (strain ATCC 35210 / DSM 4680 / CIP 102532 / B31) (Borrelia burgdorferi).